Here is a 597-residue protein sequence, read N- to C-terminus: Elongation factor 4 (597 aa).

The 178-residue stretch at 4–181 (SKIRNFSIIA…EIVDKISYPI (178 aa)) folds into the tr-type G domain. GTP contacts are provided by residues 16–21 (DHGKST) and 128–131 (NKID).

The protein belongs to the TRAFAC class translation factor GTPase superfamily. Classic translation factor GTPase family. LepA subfamily.

Its subcellular location is the cell membrane. It carries out the reaction GTP + H2O = GDP + phosphate + H(+). Required for accurate and efficient protein synthesis under certain stress conditions. May act as a fidelity factor of the translation reaction, by catalyzing a one-codon backward translocation of tRNAs on improperly translocated ribosomes. Back-translocation proceeds from a post-translocation (POST) complex to a pre-translocation (PRE) complex, thus giving elongation factor G a second chance to translocate the tRNAs correctly. Binds to ribosomes in a GTP-dependent manner. In Mycoplasmopsis pulmonis (strain UAB CTIP) (Mycoplasma pulmonis), this protein is Elongation factor 4.